A 255-amino-acid polypeptide reads, in one-letter code: tRNA (guanine-N(7)-)-methyltransferase (255 aa).

Residues 1–21 (MMHDDPNEAGLPPHDDAIPDE) form a disordered region. The S-adenosyl-L-methionine site is built by glutamate 86, glutamate 111, aspartate 138, and aspartate 161. Aspartate 161 is a catalytic residue. Residues lysine 165, aspartate 197, and 232 to 235 (TKFE) contribute to the substrate site.

The protein belongs to the class I-like SAM-binding methyltransferase superfamily. TrmB family.

It carries out the reaction guanosine(46) in tRNA + S-adenosyl-L-methionine = N(7)-methylguanosine(46) in tRNA + S-adenosyl-L-homocysteine. It functions in the pathway tRNA modification; N(7)-methylguanine-tRNA biosynthesis. Catalyzes the formation of N(7)-methylguanine at position 46 (m7G46) in tRNA. The sequence is that of tRNA (guanine-N(7)-)-methyltransferase from Burkholderia lata (strain ATCC 17760 / DSM 23089 / LMG 22485 / NCIMB 9086 / R18194 / 383).